A 721-amino-acid polypeptide reads, in one-letter code: Long-chain-fatty-acid--CoA ligase ACSBG1 (721 aa).

Positions 1–64 (MPRSSEAGYC…SHGLELSAPE (64 aa)) are disordered. Residues 26–43 (QQGASMGTSPDNSQTSSL) show a composition bias toward polar residues. A phosphoserine mark is found at Ser-34, Ser-50, Ser-53, and Ser-70. Residues 279-287 (TSGTTGNPK), 469-474 (AGYGLS), Asp-547, and Arg-562 contribute to the ATP site. Tyr-655 carries the phosphotyrosine modification. Lys-698 is an ATP binding site.

The protein belongs to the ATP-dependent AMP-binding enzyme family. Bubblegum subfamily. In terms of tissue distribution, present in testis, at a lower level in brain, and at a very low level in ovary. Not detected in other tissues. tested. Present in Leydig cells of the adult testis and to a lesser degree in the seminiferous tubules in spermatogonia and Sertoli cells (at protein level).

Its subcellular location is the cytoplasm. The protein localises to the cytoplasmic vesicle. It is found in the microsome. It localises to the endoplasmic reticulum. The protein resides in the cell membrane. It catalyses the reaction a long-chain fatty acid + ATP + CoA = a long-chain fatty acyl-CoA + AMP + diphosphate. The catalysed reaction is (E)-hexadec-2-enoate + ATP + CoA = (2E)-hexadecenoyl-CoA + AMP + diphosphate. The enzyme catalyses hexadecanoate + ATP + CoA = hexadecanoyl-CoA + AMP + diphosphate. In terms of biological role, catalyzes the conversion of fatty acids such as long-chain and very long-chain fatty acids to their active form acyl-CoAs for both synthesis of cellular lipids, and degradation via beta-oxidation. Can activate diverse saturated, monosaturated and polyunsaturated fatty acids. This Rattus norvegicus (Rat) protein is Long-chain-fatty-acid--CoA ligase ACSBG1.